The chain runs to 663 residues: DNA ligase (663 aa).

Residues 33–37 (DYSYD), 82–83 (SI), and glutamate 112 contribute to the NAD(+) site. The active-site N6-AMP-lysine intermediate is lysine 114. Residues arginine 135, glutamate 171, lysine 285, and lysine 309 each coordinate NAD(+). Positions 403, 406, 419, and 424 each coordinate Zn(2+). In terms of domain architecture, BRCT spans 581-663 (DKEAPLQGKV…SRILDAKSVS (83 aa)).

It belongs to the NAD-dependent DNA ligase family. LigA subfamily. The cofactor is Mg(2+). Mn(2+) is required as a cofactor.

It carries out the reaction NAD(+) + (deoxyribonucleotide)n-3'-hydroxyl + 5'-phospho-(deoxyribonucleotide)m = (deoxyribonucleotide)n+m + AMP + beta-nicotinamide D-nucleotide.. Functionally, DNA ligase that catalyzes the formation of phosphodiester linkages between 5'-phosphoryl and 3'-hydroxyl groups in double-stranded DNA using NAD as a coenzyme and as the energy source for the reaction. It is essential for DNA replication and repair of damaged DNA. The sequence is that of DNA ligase from Chlamydia trachomatis serovar L2 (strain ATCC VR-902B / DSM 19102 / 434/Bu).